The chain runs to 292 residues: MRGYLFGILSAVFWALSGLLYNELPLSEYTALGKVISLLFLIDFCSLLVIGITLWRKSAVDFQGVFWQPALSGILGGPIGMSAYLLSIHYLTIYYAAPLSSLFPVFAALMSYWILKEKITKTAQFGFALAIISSSLLAIEVGQEITFNTIGFIFLIICILGWSSEIVISSYTMRSLSGLQVYFLRLCGSTIGYLLILFILSLKNFSLDILSFNYVQIAGVIIFGALSYCCYYQAIYLLKPIKAMALNITYSVWAIGLGYLLYKQPIKPITLLLTLLLSAGVIVTLYYKGEQK.

EamA domains are found at residues 70-139 (ALSG…LLAI) and 160-286 (LGWS…VTLY).

This chain is Protein LicB (licB), found in Haemophilus influenzae (strain ATCC 51907 / DSM 11121 / KW20 / Rd).